The chain runs to 284 residues: uncharacterized protein (284 aa).

A helical membrane pass occupies residues 12-32 (ILFILFVVAFCVYLVPRVAIN).

The protein belongs to the serine esterase family.

Its subcellular location is the membrane. This is an uncharacterized protein from Escherichia coli (strain K12).